A 503-amino-acid polypeptide reads, in one-letter code: Maturase K (503 aa).

It belongs to the intron maturase 2 family. MatK subfamily.

It localises to the plastid. The protein resides in the chloroplast. Functionally, usually encoded in the trnK tRNA gene intron. Probably assists in splicing its own and other chloroplast group II introns. This chain is Maturase K, found in Rosa gigantea (Giant tea rose).